A 576-amino-acid polypeptide reads, in one-letter code: Proteinaceous RNase P 3 (576 aa).

A compositionally biased stretch (basic and acidic residues) spans 65–75 (NRRSRHDDESP). Positions 65–88 (NRRSRHDDESPKNPNKKKKGNRNP) are disordered. 4 PPR repeats span residues 88–123 (PEKSLLINLHSCSKRKDLSAALALYDAAITSSDIRL), 129–166 (QSLLYLCSAFISDPSLQTVAIDRGFQIFDRMVSSGISP), 167–201 (NESSVTAVARLAAAKGDGDYAFKLVKDLVAVGGVS), and 204–238 (RLRTYAPALLCFCDTLEAEKGYEVEDHMDASGIVL). In terms of domain architecture, PRORP spans 335–570 (SSAGKCLSCD…KEESLRSWMC (236 aa)). The Zn(2+) site is built by Cys340 and Cys343. 4 residues coordinate Mn(2+): Asp402, Asp480, Asp481, and Asp499. 2 residues coordinate Zn(2+): His553 and Cys570.

The protein belongs to the PPR family. P subfamily. Mg(2+) is required as a cofactor. Mn(2+) serves as cofactor.

It is found in the nucleus. The enzyme catalyses Endonucleolytic cleavage of RNA, removing 5'-extranucleotides from tRNA precursor.. In terms of biological role, endonuclease RNase P responsible for the 5' maturation of tRNA precursors. Also involved in the maturation of mRNA and small nucleolar RNA (snoRNA). The protein is Proteinaceous RNase P 3 (PRORP3) of Arabidopsis thaliana (Mouse-ear cress).